A 67-amino-acid polypeptide reads, in one-letter code: DNA-directed RNA polymerase subunit omega (67 aa).

It belongs to the RNA polymerase subunit omega family. In terms of assembly, the RNAP catalytic core consists of 2 alpha, 1 beta, 1 beta' and 1 omega subunit. When a sigma factor is associated with the core the holoenzyme is formed, which can initiate transcription.

It carries out the reaction RNA(n) + a ribonucleoside 5'-triphosphate = RNA(n+1) + diphosphate. Functionally, promotes RNA polymerase assembly. Latches the N- and C-terminal regions of the beta' subunit thereby facilitating its interaction with the beta and alpha subunits. This Bordetella petrii (strain ATCC BAA-461 / DSM 12804 / CCUG 43448) protein is DNA-directed RNA polymerase subunit omega.